The chain runs to 192 residues: Imidazoleglycerol-phosphate dehydratase (192 aa).

This sequence belongs to the imidazoleglycerol-phosphate dehydratase family.

It is found in the cytoplasm. It carries out the reaction D-erythro-1-(imidazol-4-yl)glycerol 3-phosphate = 3-(imidazol-4-yl)-2-oxopropyl phosphate + H2O. Its pathway is amino-acid biosynthesis; L-histidine biosynthesis; L-histidine from 5-phospho-alpha-D-ribose 1-diphosphate: step 6/9. The protein is Imidazoleglycerol-phosphate dehydratase of Methanocella arvoryzae (strain DSM 22066 / NBRC 105507 / MRE50).